A 203-amino-acid polypeptide reads, in one-letter code: Methyltransferase-like 26 (203 aa).

This sequence belongs to the UPF0585 family.

This is Methyltransferase-like 26 from Xenopus tropicalis (Western clawed frog).